The primary structure comprises 199 residues: Large ribosomal subunit protein uL13A (199 aa).

Ser2 carries the N-acetylserine modification. Lys177 is covalently cross-linked (Glycyl lysine isopeptide (Lys-Gly) (interchain with G-Cter in ubiquitin)).

Belongs to the universal ribosomal protein uL13 family. Component of the large ribosomal subunit (LSU). Mature yeast ribosomes consist of a small (40S) and a large (60S) subunit. The 40S small subunit contains 1 molecule of ribosomal RNA (18S rRNA) and 33 different proteins (encoded by 57 genes). The large 60S subunit contains 3 rRNA molecules (25S, 5.8S and 5S rRNA) and 46 different proteins (encoded by 81 genes). In terms of processing, N-terminally acetylated by acetyltransferase NatA.

It localises to the cytoplasm. Its function is as follows. Component of the ribosome, a large ribonucleoprotein complex responsible for the synthesis of proteins in the cell. The small ribosomal subunit (SSU) binds messenger RNAs (mRNAs) and translates the encoded message by selecting cognate aminoacyl-transfer RNA (tRNA) molecules. The large subunit (LSU) contains the ribosomal catalytic site termed the peptidyl transferase center (PTC), which catalyzes the formation of peptide bonds, thereby polymerizing the amino acids delivered by tRNAs into a polypeptide chain. The nascent polypeptides leave the ribosome through a tunnel in the LSU and interact with protein factors that function in enzymatic processing, targeting, and the membrane insertion of nascent chains at the exit of the ribosomal tunnel. The polypeptide is Large ribosomal subunit protein uL13A (Saccharomyces cerevisiae (strain ATCC 204508 / S288c) (Baker's yeast)).